Reading from the N-terminus, the 338-residue chain is MLQEAIKKIVSKENLEEREAYAVMNEIMSGNATPSLIGGILIGLRLKGESVEEITGFAKAMRDNAIKLELASDYVIDTCGTGGDGGKTFNISTAVAIIASAAGVKVAKHGNRAVSSKSGSADVLMELGFDIEMVPEKTKRLIEEKGMGFLFAPKYHVAMKNVAGIRKELGTRTVFNVLGPLTNPAFVKGQVLGVYDKELTHPLAEVLLRLGTEKAMVVHGFDGLDEITTTSPTFVSEVKEGKVIDYVIDPEDYGIPYAKLEDLEGKDAKENAQIILNILKGEKGPKRDIVVLNAAAALYIGKVVEDLKEGIKVANYLIDTGLALDKLTEILEYQRRLN.

5-phospho-alpha-D-ribose 1-diphosphate-binding positions include Gly80, 83–84 (GD), Thr88, 90–93 (NIST), 108–116 (KHGNRAVSS), and Ser120. Position 80 (Gly80) interacts with anthranilate. Ser92 serves as a coordination point for Mg(2+). Asn111 provides a ligand contact to anthranilate. Arg166 is an anthranilate binding site. 2 residues coordinate Mg(2+): Asp225 and Glu226.

This sequence belongs to the anthranilate phosphoribosyltransferase family. Homodimer. Mg(2+) serves as cofactor.

The enzyme catalyses N-(5-phospho-beta-D-ribosyl)anthranilate + diphosphate = 5-phospho-alpha-D-ribose 1-diphosphate + anthranilate. It functions in the pathway amino-acid biosynthesis; L-tryptophan biosynthesis; L-tryptophan from chorismate: step 2/5. Its function is as follows. Catalyzes the transfer of the phosphoribosyl group of 5-phosphorylribose-1-pyrophosphate (PRPP) to anthranilate to yield N-(5'-phosphoribosyl)-anthranilate (PRA). In Thermoanaerobacter sp. (strain X514), this protein is Anthranilate phosphoribosyltransferase.